Consider the following 749-residue polypeptide: Chaperone protein dnaK3 (749 aa).

Threonine 198 carries the phosphothreonine; by autocatalysis modification. Basic and acidic residues-rich tracts occupy residues 643-653 (RWDADPWDRSR), 661-694 (YDDR…RDRN), and 711-724 (PTWE…RDRS). Residues 643–749 (RWDADPWDRS…GWDDDDDEWF (107 aa)) are disordered. A compositionally biased stretch (acidic residues) spans 740–749 (GWDDDDDEWF).

It belongs to the heat shock protein 70 family.

Functionally, acts as a chaperone. In Synechococcus elongatus (strain ATCC 33912 / PCC 7942 / FACHB-805) (Anacystis nidulans R2), this protein is Chaperone protein dnaK3 (dnaK3).